Reading from the N-terminus, the 496-residue chain is Glutamyl-tRNA(Gln) amidotransferase subunit A (496 aa).

Residues K75 and S150 each act as charge relay system in the active site. The active-site Acyl-ester intermediate is the S174.

Belongs to the amidase family. GatA subfamily. In terms of assembly, heterotrimer of A, B and C subunits.

The catalysed reaction is L-glutamyl-tRNA(Gln) + L-glutamine + ATP + H2O = L-glutaminyl-tRNA(Gln) + L-glutamate + ADP + phosphate + H(+). Its function is as follows. Allows the formation of correctly charged Gln-tRNA(Gln) through the transamidation of misacylated Glu-tRNA(Gln) in organisms which lack glutaminyl-tRNA synthetase. The reaction takes place in the presence of glutamine and ATP through an activated gamma-phospho-Glu-tRNA(Gln). The chain is Glutamyl-tRNA(Gln) amidotransferase subunit A from Burkholderia ambifaria (strain MC40-6).